Here is a 211-residue protein sequence, read N- to C-terminus: FMN-dependent NADH:quinone oxidoreductase 3 (211 aa).

102–105 (MWNF) provides a ligand contact to FMN.

Belongs to the azoreductase type 1 family. In terms of assembly, homodimer. It depends on FMN as a cofactor.

The catalysed reaction is 2 a quinone + NADH + H(+) = 2 a 1,4-benzosemiquinone + NAD(+). The enzyme catalyses N,N-dimethyl-1,4-phenylenediamine + anthranilate + 2 NAD(+) = 2-(4-dimethylaminophenyl)diazenylbenzoate + 2 NADH + 2 H(+). Quinone reductase that provides resistance to thiol-specific stress caused by electrophilic quinones. Its function is as follows. Also exhibits azoreductase activity. Catalyzes the reductive cleavage of the azo bond in aromatic azo compounds to the corresponding amines. The protein is FMN-dependent NADH:quinone oxidoreductase 3 of Bacillus cereus (strain ZK / E33L).